A 460-amino-acid chain; its full sequence is Bifunctional protein GlmU (460 aa).

The tract at residues 1-232 is pyrophosphorylase; sequence MAISAALILA…PDEIMGVNDR (232 aa). Residues 9–12, Lys23, Gln75, and 80–81 each bind UDP-N-acetyl-alpha-D-glucosamine; these read LAAG and GT. A Mg(2+)-binding site is contributed by Asp105. Residues Gly142, Glu157, Asn172, and Asn230 each contribute to the UDP-N-acetyl-alpha-D-glucosamine site. A Mg(2+)-binding site is contributed by Asn230. A linker region spans residues 233-253; the sequence is VQLAHAARVLRQRVNLQLMLA. The tract at residues 254 to 460 is N-acetyltransferase; that stretch reads GVTLIDPDQT…GWCLKKRDNG (207 aa). Arg336 and Lys354 together coordinate UDP-N-acetyl-alpha-D-glucosamine. The Proton acceptor role is filled by His366. 2 residues coordinate UDP-N-acetyl-alpha-D-glucosamine: Tyr369 and Asn380. Residues 389–390, Ser408, Ala426, and Arg443 contribute to the acetyl-CoA site; that span reads NY.

This sequence in the N-terminal section; belongs to the N-acetylglucosamine-1-phosphate uridyltransferase family. In the C-terminal section; belongs to the transferase hexapeptide repeat family. As to quaternary structure, homotrimer. It depends on Mg(2+) as a cofactor.

Its subcellular location is the cytoplasm. It catalyses the reaction alpha-D-glucosamine 1-phosphate + acetyl-CoA = N-acetyl-alpha-D-glucosamine 1-phosphate + CoA + H(+). The catalysed reaction is N-acetyl-alpha-D-glucosamine 1-phosphate + UTP + H(+) = UDP-N-acetyl-alpha-D-glucosamine + diphosphate. The protein operates within nucleotide-sugar biosynthesis; UDP-N-acetyl-alpha-D-glucosamine biosynthesis; N-acetyl-alpha-D-glucosamine 1-phosphate from alpha-D-glucosamine 6-phosphate (route II): step 2/2. Its pathway is nucleotide-sugar biosynthesis; UDP-N-acetyl-alpha-D-glucosamine biosynthesis; UDP-N-acetyl-alpha-D-glucosamine from N-acetyl-alpha-D-glucosamine 1-phosphate: step 1/1. It functions in the pathway bacterial outer membrane biogenesis; LPS lipid A biosynthesis. Its function is as follows. Catalyzes the last two sequential reactions in the de novo biosynthetic pathway for UDP-N-acetylglucosamine (UDP-GlcNAc). The C-terminal domain catalyzes the transfer of acetyl group from acetyl coenzyme A to glucosamine-1-phosphate (GlcN-1-P) to produce N-acetylglucosamine-1-phosphate (GlcNAc-1-P), which is converted into UDP-GlcNAc by the transfer of uridine 5-monophosphate (from uridine 5-triphosphate), a reaction catalyzed by the N-terminal domain. This is Bifunctional protein GlmU from Trichlorobacter lovleyi (strain ATCC BAA-1151 / DSM 17278 / SZ) (Geobacter lovleyi).